A 92-amino-acid polypeptide reads, in one-letter code: Protein EMB-1 (92 aa).

3 stretches are compositionally biased toward basic and acidic residues: residues 1-16 (MASQQEKKELDARARQ), 37-61 (AEGRSKGGQTRKEQLGGEGYHEMGR), and 72-92 (GGERAEQEGIDIDESKFRTKK). A disordered region spans residues 1 to 92 (MASQQEKKEL…IDESKFRTKK (92 aa)).

Belongs to the small hydrophilic plant seed protein family. Expressed in embryogenic cells, somatic embryos and seeds at the later stages of development. In the embryos, expressed in the procambium, the root and shoot meristem and the protoderm of the cotyledons. Not detected in the endosperm or the aleurone layer, in young leaves or roots.

It localises to the nucleus. In Daucus carota (Wild carrot), this protein is Protein EMB-1.